The sequence spans 135 residues: uncharacterized protein (135 aa).

This is an uncharacterized protein from Commelina yellow mottle virus (CoYMV).